A 185-amino-acid chain; its full sequence is Ribosome-recycling factor (185 aa).

Belongs to the RRF family.

The protein localises to the cytoplasm. Its function is as follows. Responsible for the release of ribosomes from messenger RNA at the termination of protein biosynthesis. May increase the efficiency of translation by recycling ribosomes from one round of translation to another. The polypeptide is Ribosome-recycling factor (Finegoldia magna (strain ATCC 29328 / DSM 20472 / WAL 2508) (Peptostreptococcus magnus)).